The sequence spans 517 residues: Crotonobetaine/carnitine--CoA ligase (517 aa).

It belongs to the ATP-dependent AMP-binding enzyme family.

It catalyses the reaction 4-(trimethylamino)butanoate + ATP + CoA = 4-(trimethylamino)butanoyl-CoA + AMP + diphosphate. The catalysed reaction is crotonobetaine + ATP + CoA = crotonobetainyl-CoA + AMP + diphosphate. The enzyme catalyses (R)-carnitine + ATP + CoA = (R)-carnitinyl-CoA + AMP + diphosphate. Its pathway is amine and polyamine metabolism; carnitine metabolism. Functionally, catalyzes the transfer of CoA to carnitine, generating the initial carnitinyl-CoA needed for the CaiB reaction cycle. Also has activity toward crotonobetaine and gamma-butyrobetaine. This is Crotonobetaine/carnitine--CoA ligase from Escherichia coli O1:K1 / APEC.